A 45-amino-acid chain; its full sequence is Metallothionein-like protein 1C (45 aa).

The protein belongs to the metallothionein superfamily. Type 15 family. Widely expressed at low levels.

In terms of biological role, metallothioneins have a high content of cysteine residues that bind various heavy metals. Confers tolerance to cadmium (Cd) and plays a role in Cd and zinc (Zn) homeostasis. The chain is Metallothionein-like protein 1C (MT1C) from Arabidopsis thaliana (Mouse-ear cress).